Consider the following 263-residue polypeptide: Trans-aconitate 2-methyltransferase (263 aa).

Belongs to the methyltransferase superfamily. Tam family.

Its subcellular location is the cytoplasm. The catalysed reaction is trans-aconitate + S-adenosyl-L-methionine = (E)-3-(methoxycarbonyl)pent-2-enedioate + S-adenosyl-L-homocysteine. Functionally, catalyzes the S-adenosylmethionine monomethyl esterification of trans-aconitate. In Mycobacterium marinum (strain ATCC BAA-535 / M), this protein is Trans-aconitate 2-methyltransferase.